Consider the following 508-residue polypeptide: MTQMSQDEIITNTKTVLQGLEALRVEHVSIMNGIAEVQKDNEKSDMLRKNIENIELGLSEAQVMMALTSHLQNIEAEKHKLKTQVRRLHQENAWLRDELANTQQKFQASEQLVAQLEEEKKHLEFMASVKKYDENQEQDDACDKSRTDPVVELFPDEENEDRHNMSPTPPSQFANQTSGYEIPARLRTLHNLVIQYASQGRYEVAVPLCKQALEDLERTSGHDHPDVATMLNILALVYRDQNKYKEAANLLNDALSIRGKTLGENHPAVAATLNNLAVLYGKRGKYKDAEPLCKRALEIREKVLGKDHPDVAKQLNNLALLCQNQGKYDEVEKYYQRALDIYESKLGPDDPNVAKTKNNLAGCYLKQGRYTEAEILYKQVLTRAHEREFGAIDSKNKPIWQVAEEREEHKFDNRENTPYGEYGGWHKAAKVDSPTVTTTLKNLGALYRRQGMFEAAETLEDCAMRSKKEAYDLAKQTKLSQLLTSNEKRRSKAIKEDLDFSEEKNAKP.

The stretch at 34-129 (IAEVQKDNEK…KKHLEFMASV (96 aa)) forms a coiled coil. The interval 156–175 (DEENEDRHNMSPTPPSQFAN) is disordered. Thr168 is subject to Phosphothreonine. TPR repeat units follow at residues 186–219 (LRTLHNLVIQYASQGRYEVAVPLCKQALEDLERT), 228–261 (ATMLNILALVYRDQNKYKEAANLLNDALSIRGKT), 270–303 (AATLNNLAVLYGKRGKYKDAEPLCKRALEIREKV), 312–345 (AKQLNNLALLCQNQGKYDEVEKYYQRALDIYESK), 354–387 (AKTKNNLAGCYLKQGRYTEAEILYKQVLTRAHER), and 437–470 (TTTLKNLGALYRRQGMFEAAETLEDCAMRSKKEA). Thr477 is modified (phosphothreonine). Phosphoserine occurs at positions 480 and 485. The segment at 484-508 (TSNEKRRSKAIKEDLDFSEEKNAKP) is disordered. Residues 493–508 (AIKEDLDFSEEKNAKP) are compositionally biased toward basic and acidic residues.

This sequence belongs to the kinesin light chain family. In terms of assembly, oligomeric complex composed of two heavy chains and two light chains. As to expression, ubiquitous.

It is found in the cytoplasm. It localises to the cytoskeleton. Kinesin is a microtubule-associated force-producing protein that may play a role in organelle transport. The light chain may function in coupling of cargo to the heavy chain or in the modulation of its ATPase activity. The chain is Kinesin light chain (Klc) from Drosophila melanogaster (Fruit fly).